The following is a 476-amino-acid chain: Aspartyl/glutamyl-tRNA(Asn/Gln) amidotransferase subunit B (476 aa).

Belongs to the GatB/GatE family. GatB subfamily. As to quaternary structure, heterotrimer of A, B and C subunits.

The enzyme catalyses L-glutamyl-tRNA(Gln) + L-glutamine + ATP + H2O = L-glutaminyl-tRNA(Gln) + L-glutamate + ADP + phosphate + H(+). It catalyses the reaction L-aspartyl-tRNA(Asn) + L-glutamine + ATP + H2O = L-asparaginyl-tRNA(Asn) + L-glutamate + ADP + phosphate + 2 H(+). Allows the formation of correctly charged Asn-tRNA(Asn) or Gln-tRNA(Gln) through the transamidation of misacylated Asp-tRNA(Asn) or Glu-tRNA(Gln) in organisms which lack either or both of asparaginyl-tRNA or glutaminyl-tRNA synthetases. The reaction takes place in the presence of glutamine and ATP through an activated phospho-Asp-tRNA(Asn) or phospho-Glu-tRNA(Gln). The polypeptide is Aspartyl/glutamyl-tRNA(Asn/Gln) amidotransferase subunit B (Listeria welshimeri serovar 6b (strain ATCC 35897 / DSM 20650 / CCUG 15529 / CIP 8149 / NCTC 11857 / SLCC 5334 / V8)).